A 94-amino-acid chain; its full sequence is HssA/B-like protein 49 (94 aa).

Positions 1 to 20 (MTLFSSISSISNPMTSSKSS) are disordered.

Belongs to the hssA/B family.

This chain is HssA/B-like protein 49 (hssl49), found in Dictyostelium discoideum (Social amoeba).